The primary structure comprises 217 residues: Adenylate kinase (217 aa).

Position 10 to 15 (10 to 15 (GIGKGT)) interacts with ATP. The tract at residues 30–59 (ATGDIFRKNFKENTELGILIKKIIAQGLLV) is NMP. Residues T31, R36, 57 to 59 (LLV), 85 to 88 (GFPR), and Q92 each bind AMP. Positions 126-163 (GRRICPECGKVYHIENIPPKTPGICDKDQKTLIQREDD) are LID. Residue R127 participates in ATP binding. Residues C130 and C133 each coordinate Zn(2+). 136–137 (VY) contributes to the ATP binding site. Residues C150 and D153 each coordinate Zn(2+). AMP contacts are provided by R160 and R171. Q199 is a binding site for ATP.

The protein belongs to the adenylate kinase family. Monomer.

The protein resides in the cytoplasm. It catalyses the reaction AMP + ATP = 2 ADP. It participates in purine metabolism; AMP biosynthesis via salvage pathway; AMP from ADP: step 1/1. Its function is as follows. Catalyzes the reversible transfer of the terminal phosphate group between ATP and AMP. Plays an important role in cellular energy homeostasis and in adenine nucleotide metabolism. The polypeptide is Adenylate kinase (Onion yellows phytoplasma (strain OY-M)).